A 236-amino-acid chain; its full sequence is uncharacterized protein (236 aa).

One can recognise an RPE1 insert domain in the interval R117–S160.

This is an uncharacterized protein from Rickettsia prowazekii (strain Madrid E).